The chain runs to 514 residues: MGSDTSESNNDWKTQLNIPKKDTRPQTDDVLNTKGRSFEDFYLKRELLMGIFEAGFEKPSPIQEEAIPVAIAGKDILARAKNGTGKTAAFVIPTLEKVKPKLNKIQALIMVPTRELALQTSQVVRTLGKHCGISCMVTTGGTNLRDDIMRLNEPVHILVGTPGRVLDLASRRVTDLSECHLFIMDEADKMLSRDFKVLAEQILGFLPERRQLLLFSATFPVTVKEFMVKHLKNPHEINLMDELTLKGISQFYAFVEEKQKLHCLNTLFSKLQINQAIIFCNSTNRVELLAKKITELGFSCYYSHARMKQSERNKVFHEFRQGKVRTLVCSDLLTRGIDIQAVNVVINFDFPKTAETYLHRIGRSGRFGHLGLAINLINWNDRFNLYKIEQELNTEIAPIPSQIDKSLYVAEDSSAVPIPFPLESLPITANAPQQPANAEPLPPQQTQVQFHAPPQQQQQQQQQQQQQQYQQFPNQQQQQYGQPLMPQNYQQQAYPPQPFPSKGFPQQQYTQAPQ.

Over residues 1-17 the composition is skewed to polar residues; that stretch reads MGSDTSESNNDWKTQLN. Positions 1–31 are disordered; that stretch reads MGSDTSESNNDWKTQLNIPKKDTRPQTDDVL. Residues 36–64 carry the Q motif motif; that stretch reads RSFEDFYLKRELLMGIFEAGFEKPSPIQE. The 171-residue stretch at 67–237 folds into the Helicase ATP-binding domain; sequence IPVAIAGKDI…VKHLKNPHEI (171 aa). Position 80–87 (80–87) interacts with ATP; that stretch reads AKNGTGKT. Positions 185–188 match the DEAD box motif; it reads DEAD. The region spanning 247–407 is the Helicase C-terminal domain; the sequence is GISQFYAFVE…PIPSQIDKSL (161 aa). Residues 427–514 are disordered; it reads ITANAPQQPA…PQQQYTQAPQ (88 aa). A compositionally biased stretch (low complexity) spans 429 to 494; the sequence is ANAPQQPANA…MPQNYQQQAY (66 aa). A compositionally biased stretch (polar residues) spans 504–514; sequence FPQQQYTQAPQ.

The protein belongs to the DEAD box helicase family. DDX6/DHH1 subfamily.

It localises to the cytoplasm. Its subcellular location is the P-body. The catalysed reaction is ATP + H2O = ADP + phosphate + H(+). ATP-dependent RNA helicase involved in mRNA turnover, and more specifically in mRNA decapping. Is involved in G1/S DNA-damage checkpoint recovery, probably through the regulation of the translational status of a subset of mRNAs. May also have a role in translation and mRNA nuclear export. In Kluyveromyces lactis (strain ATCC 8585 / CBS 2359 / DSM 70799 / NBRC 1267 / NRRL Y-1140 / WM37) (Yeast), this protein is ATP-dependent RNA helicase DHH1 (DHH1).